A 319-amino-acid polypeptide reads, in one-letter code: Beta-ketoacyl-[acyl-carrier-protein] synthase III (319 aa).

Catalysis depends on residues Cys110 and His246. Positions 247–251 (QANYR) are ACP-binding. Asn276 is a catalytic residue.

It belongs to the thiolase-like superfamily. FabH family. In terms of assembly, homodimer.

It is found in the cytoplasm. The catalysed reaction is malonyl-[ACP] + acetyl-CoA + H(+) = 3-oxobutanoyl-[ACP] + CO2 + CoA. The protein operates within lipid metabolism; fatty acid biosynthesis. In terms of biological role, catalyzes the condensation reaction of fatty acid synthesis by the addition to an acyl acceptor of two carbons from malonyl-ACP. Catalyzes the first condensation reaction which initiates fatty acid synthesis and may therefore play a role in governing the total rate of fatty acid production. Possesses both acetoacetyl-ACP synthase and acetyl transacylase activities. Its substrate specificity determines the biosynthesis of branched-chain and/or straight-chain of fatty acids. This is Beta-ketoacyl-[acyl-carrier-protein] synthase III from Lactobacillus delbrueckii subsp. bulgaricus (strain ATCC BAA-365 / Lb-18).